A 472-amino-acid chain; its full sequence is Collagenase 3 (472 aa).

The N-terminal stretch at 1-19 (MHPGVLAAFLFLSWTRCWS) is a signal peptide. Residues 20–104 (LPVPNDDDDD…PRCGVPDVGE (85 aa)) constitute a propeptide, activation peptide. The Cysteine switch signature appears at 95–102 (PRCGVPDV). Cys-97 contributes to the Zn(2+) binding site. The N-linked (GlcNAc...) asparagine glycan is linked to Asn-118. Asp-129 is a binding site for Ca(2+). N-linked (GlcNAc...) asparagine glycans are attached at residues Asn-153 and Asn-159. Asp-163 serves as a coordination point for Ca(2+). Residues His-173 and Asp-175 each contribute to the Zn(2+) site. Positions 177-247 (YPFDGPSGLL…GALMFPIYTY (71 aa)) are interaction with TIMP2. Residues Asp-180, Gly-181, Ser-183, and Leu-185 each contribute to the Ca(2+) site. His-188 serves as a coordination point for Zn(2+). Ca(2+)-binding residues include Asn-195, Gly-197, and Asp-199. His-201 is a Zn(2+) binding site. Ca(2+)-binding residues include Asp-203, Asp-204, and Glu-206. His-223 contacts Zn(2+). Glu-224 is an active-site residue. The Zn(2+) site is built by His-227, His-233, and Met-241. An interaction with collagen region spans residues 269–472 (PGDEDPNPKH…VMPTNSLLWC (204 aa)). 4 Hemopexin repeats span residues 282–331 (PDKC…WPEL), 332–378 (PNRI…GFPK), 380–428 (VKKI…FPGI), and 429–472 (GDKV…LLWC). Cys-285 and Cys-472 form a disulfide bridge. 4 residues coordinate Ca(2+): Asp-292, Ile-294, Asp-336, and Ala-338. Tyr-367 bears the Phosphotyrosine; by PKDCC mark. Residues Ser-384, Ala-386, Asp-433, and Val-435 each coordinate Ca(2+).

The protein belongs to the peptidase M10A family. Ca(2+) serves as cofactor. Requires Zn(2+) as cofactor. The proenzyme is activated by removal of the propeptide; this cleavage can be effected by other matrix metalloproteinases, such as MMP2, MMP3 and MMP14 and may involve several cleavage steps. Cleavage can also be autocatalytic, after partial maturation by another protease or after treatment with 4-aminophenylmercuric acetate (APMA) (in vitro). Post-translationally, N-glycosylated. In terms of processing, tyrosine phosphorylated by PKDCC/VLK. As to expression, seems to be specific to breast carcinomas.

The protein resides in the secreted. Its subcellular location is the extracellular space. It localises to the extracellular matrix. Its function is as follows. Plays a role in the degradation of extracellular matrix proteins including fibrillar collagen, fibronectin, TNC and ACAN. Cleaves triple helical collagens, including type I, type II and type III collagen, but has the highest activity with soluble type II collagen. Can also degrade collagen type IV, type XIV and type X. May also function by activating or degrading key regulatory proteins, such as TGFB1 and CCN2. Plays a role in wound healing, tissue remodeling, cartilage degradation, bone development, bone mineralization and ossification. Required for normal embryonic bone development and ossification. Plays a role in the healing of bone fractures via endochondral ossification. Plays a role in wound healing, probably by a mechanism that involves proteolytic activation of TGFB1 and degradation of CCN2. Plays a role in keratinocyte migration during wound healing. May play a role in cell migration and in tumor cell invasion. The protein is Collagenase 3 (MMP13) of Equus caballus (Horse).